A 149-amino-acid chain; its full sequence is Ribosome maturation factor RimP (149 aa).

It belongs to the RimP family.

The protein localises to the cytoplasm. Its function is as follows. Required for maturation of 30S ribosomal subunits. This is Ribosome maturation factor RimP from Sulfurimonas denitrificans (strain ATCC 33889 / DSM 1251) (Thiomicrospira denitrificans (strain ATCC 33889 / DSM 1251)).